Reading from the N-terminus, the 436-residue chain is Sulfopropanediol 3-dehydrogenase (436 aa).

Residues tyrosine 118, glutamine 180, and asparagine 203 each contribute to the NAD(+) site. 2 residues coordinate Zn(2+): glutamine 248 and histidine 251. Catalysis depends on proton acceptor residues glutamate 318 and histidine 319. Aspartate 352 and histidine 411 together coordinate Zn(2+).

It belongs to the histidinol dehydrogenase family. HpsN subfamily. Requires Zn(2+) as cofactor.

The catalysed reaction is (2R)-3-sulfopropanediol + 2 NAD(+) + H2O = (2R)-3-sulfolactate + 2 NADH + 3 H(+). Its function is as follows. Catalyzes the NAD-dependent oxidation of (R)-2,3-dihydroxypropane-1-sulfonate to (R)-3-sulfolactate. This is Sulfopropanediol 3-dehydrogenase from Cupriavidus pinatubonensis (strain JMP 134 / LMG 1197) (Cupriavidus necator (strain JMP 134)).